We begin with the raw amino-acid sequence, 142 residues long: Transcriptional regulator MraZ (142 aa).

2 consecutive SpoVT-AbrB domains span residues 5–48 and 77–120; these read EFEY…PLCE and AFDV…DKET.

Belongs to the MraZ family. As to quaternary structure, forms oligomers.

The protein resides in the cytoplasm. It localises to the nucleoid. The protein is Transcriptional regulator MraZ of Dehalococcoides mccartyi (strain ATCC BAA-2266 / KCTC 15142 / 195) (Dehalococcoides ethenogenes (strain 195)).